Here is a 73-residue protein sequence, read N- to C-terminus: Translation initiation factor IF-1 (73 aa).

One can recognise an S1-like domain in the interval 1–73; that stretch reads MPKKDGAIEI…SRGRIVYRYK (73 aa).

This sequence belongs to the IF-1 family. In terms of assembly, component of the 30S ribosomal translation pre-initiation complex which assembles on the 30S ribosome in the order IF-2 and IF-3, IF-1 and N-formylmethionyl-tRNA(fMet); mRNA recruitment can occur at any time during PIC assembly.

It is found in the cytoplasm. In terms of biological role, one of the essential components for the initiation of protein synthesis. Stabilizes the binding of IF-2 and IF-3 on the 30S subunit to which N-formylmethionyl-tRNA(fMet) subsequently binds. Helps modulate mRNA selection, yielding the 30S pre-initiation complex (PIC). Upon addition of the 50S ribosomal subunit IF-1, IF-2 and IF-3 are released leaving the mature 70S translation initiation complex. This is Translation initiation factor IF-1 from Frankia alni (strain DSM 45986 / CECT 9034 / ACN14a).